A 116-amino-acid chain; its full sequence is Putative superoxide reductase (116 aa).

Fe cation contacts are provided by histidine 20, histidine 46, histidine 52, cysteine 101, and histidine 104.

This sequence belongs to the desulfoferrodoxin family. Fe cation serves as cofactor.

The catalysed reaction is reduced [rubredoxin] + superoxide + 2 H(+) = oxidized [rubredoxin] + H2O2. Its function is as follows. Uses electrons from reduced NADP, by way of rubredoxin and an oxidoreductase, to catalyze the reduction of superoxide to hydrogen peroxide. The protein is Putative superoxide reductase of Methanocaldococcus jannaschii (strain ATCC 43067 / DSM 2661 / JAL-1 / JCM 10045 / NBRC 100440) (Methanococcus jannaschii).